The sequence spans 386 residues: Alcohol dehydrogenase-like 2 (386 aa).

Zn(2+) contacts are provided by Cys51, Thr53, His74, Cys104, Cys107, Cys110, Cys118, and Cys183. Residues Thr53 and His74 each coordinate an alcohol. Thr53 lines the NAD(+) pocket. NAD(+)-binding positions include 208-213, Asp232, Lys237, 302-304, Phe329, and Arg379; these read GLGAVG and LGM.

The protein belongs to the zinc-containing alcohol dehydrogenase family. Class-III subfamily. In terms of assembly, homodimer. The cofactor is Zn(2+).

It is found in the cytoplasm. The catalysed reaction is a primary alcohol + NAD(+) = an aldehyde + NADH + H(+). The enzyme catalyses a secondary alcohol + NAD(+) = a ketone + NADH + H(+). In Arabidopsis thaliana (Mouse-ear cress), this protein is Alcohol dehydrogenase-like 2.